The following is a 145-amino-acid chain: UPF0179 protein MmarC6_0993 (145 aa).

It belongs to the UPF0179 family.

The chain is UPF0179 protein MmarC6_0993 from Methanococcus maripaludis (strain C6 / ATCC BAA-1332).